The chain runs to 149 residues: Calmodulin (149 aa).

Alanine 2 carries the N-acetylalanine modification. EF-hand domains follow at residues 8–43, 44–79, 81–116, and 117–149; these read EQIS…LGQN, PTEA…KMRD, DSEE…LGEK, and LTDN…MLSK. 20 residues coordinate Ca(2+): aspartate 21, aspartate 23, aspartate 25, threonine 27, glutamate 32, aspartate 57, aspartate 59, asparagine 61, threonine 63, glutamate 68, aspartate 94, aspartate 96, asparagine 98, tyrosine 100, glutamate 105, aspartate 130, aspartate 132, aspartate 134, glutamine 136, and glutamate 141.

Belongs to the calmodulin family. Trimethylation of Lys-116 observed in other calmodulins is absent here.

Functionally, calmodulin mediates the control of a large number of enzymes, ion channels and other proteins by Ca(2+). Among the enzymes to be stimulated by the calmodulin-Ca(2+) complex are a number of protein kinases and phosphatases. This Pleurotus cornucopiae (Cornucopia mushroom) protein is Calmodulin (CMD1).